The following is a 233-amino-acid chain: Large ribosomal subunit protein uL1 (233 aa).

It belongs to the universal ribosomal protein uL1 family. Part of the 50S ribosomal subunit.

In terms of biological role, binds directly to 23S rRNA. The L1 stalk is quite mobile in the ribosome, and is involved in E site tRNA release. Protein L1 is also a translational repressor protein, it controls the translation of the L11 operon by binding to its mRNA. The sequence is that of Large ribosomal subunit protein uL1 from Vibrio vulnificus (strain CMCP6).